The sequence spans 524 residues: Citrate exporter 1 (524 aa).

The tract at residues 1-49 (MSSTTSSSRSDLEKVPVPQVTPRDSDSDKGSLSPEPSTLEAQSSEKPPH) is disordered. Residues 34–45 (PEPSTLEAQSSE) are compositionally biased toward polar residues. The helical transmembrane segment at 60-80 (MVCIVSLAAIFSPLSSNIYFP) threads the bilayer. Residue Asn-90 is glycosylated (N-linked (GlcNAc...) asparagine). 5 consecutive transmembrane segments (helical) span residues 95–115 (LATL…SFWG), 125–145 (PVFI…AESK), 155–175 (ALQA…IGDI), 186–206 (GIFG…GGIF), and 215–235 (IFWF…VLLP). The N-linked (GlcNAc...) asparagine glycan is linked to Asn-244. The next 6 membrane-spanning stretches (helical) occupy residues 296–316 (VFIT…VTSS), 332–352 (IGLT…LVGY), 395–415 (TWWV…SLRT), 417–437 (LAVP…LFTI), 459–479 (LMRC…LDAL), and 481–501 (PDYT…LLYV).

This sequence belongs to the major facilitator superfamily.

The protein localises to the cell membrane. It catalyses the reaction citrate(in) = citrate(out). Its function is as follows. Transmembrane transporter that exports citrate across the cell membrane. The protein is Citrate exporter 1 of Aspergillus niger (strain ATCC 1015 / CBS 113.46 / FGSC A1144 / LSHB Ac4 / NCTC 3858a / NRRL 328 / USDA 3528.7).